A 445-amino-acid polypeptide reads, in one-letter code: Serine protease inhibitor A3F (445 aa).

N-linked (GlcNAc...) asparagine glycosylation is found at Asn28, Asn94, Asn174, and Asn259. The tract at residues 357–382 (GTEAAAGTGYQNLQCCQGVIYSMKIY) is RCL.

The protein belongs to the serpin family.

This chain is Serine protease inhibitor A3F (Serpina3f), found in Mus musculus (Mouse).